The following is a 205-amino-acid chain: MVRVKICGITNLEDALFSVESGADAVGFVFYPKSKRYISPEDARRISVELPPFVFRVGVFVNEEPEKILDVASYVQLNAVQLHGEEPIELCRKIAERILVIKAVGISNERDIERALNYREFPVLLDTKTPEYGGSGKTFDWSLILPYRDQFRYLVLSGGLNPDNVRSAIDMVRPFAVDVSSGVEAFPGKKDHDSIKTFIKNAKGL.

It belongs to the TrpF family.

The catalysed reaction is N-(5-phospho-beta-D-ribosyl)anthranilate = 1-(2-carboxyphenylamino)-1-deoxy-D-ribulose 5-phosphate. It participates in amino-acid biosynthesis; L-tryptophan biosynthesis; L-tryptophan from chorismate: step 3/5. The chain is N-(5'-phosphoribosyl)anthranilate isomerase from Thermotoga petrophila (strain ATCC BAA-488 / DSM 13995 / JCM 10881 / RKU-1).